A 146-amino-acid polypeptide reads, in one-letter code: Hemoglobin subunit beta (146 aa).

An N-acetylvaline modification is found at Val1. One can recognise a Globin domain in the interval 2-146 (HLTPDEKNAV…VANALAHKYH (145 aa)). Phosphothreonine is present on Thr12. Ser44 is subject to Phosphoserine. Residue Lys59 is modified to N6-acetyllysine. His63 contributes to the heme b binding site. The residue at position 82 (Lys82) is an N6-acetyllysine. Heme b is bound at residue His92. Cys93 bears the S-nitrosocysteine mark. N6-acetyllysine is present on Lys144.

The protein belongs to the globin family. Heterotetramer of two alpha chains and two beta chains. As to expression, red blood cells.

In terms of biological role, involved in oxygen transport from the lung to the various peripheral tissues. The sequence is that of Hemoglobin subunit beta (HBB) from Piliocolobus badius (Western red colobus).